A 678-amino-acid chain; its full sequence is PTS system glucose-specific EIICBA component (678 aa).

The PTS EIIC type-1 domain occupies 3–414; sequence KKLFGQLQRI…FKYKTPGRED (412 aa). 11 helical membrane-spanning segments follow: residues 16-36, 63-83, 89-109, 126-146, 170-190, 211-231, 273-293, 303-323, 329-349, 355-375, and 382-402; these read LMLP…GTAM, AGGI…AIGL, VAAI…GAFL, VLGI…GALA, FVPI…AWIW, LAVF…LHHI, FMQG…LAIY, VVAG…ITEP, LFVA…SFLI, VHLG…GVLP, and LVIP…RFLI. The region spanning 425–506 is the PTS EIIB type-1 domain; sequence SELPFNVLKA…SLIMKGEITK (82 aa). Cys447 acts as the Phosphocysteine intermediate; for EIIB activity in catalysis. Positions 547-651 constitute a PTS EIIA type-1 domain; it reads DQVFAQKMMG…STVTPLIITN (105 aa). Catalysis depends on His599, which acts as the Tele-phosphohistidine intermediate; for EIIA activity.

The protein resides in the cell membrane. The enzyme catalyses N(pros)-phospho-L-histidyl-[protein] + D-glucose(out) = D-glucose 6-phosphate(in) + L-histidyl-[protein]. Functionally, the phosphoenolpyruvate-dependent sugar phosphotransferase system (sugar PTS), a major carbohydrate active transport system, catalyzes the phosphorylation of incoming sugar substrates concomitantly with their translocation across the cell membrane. This system is involved in glucose transport. The chain is PTS system glucose-specific EIICBA component (ptsG) from Staphylococcus saprophyticus subsp. saprophyticus (strain ATCC 15305 / DSM 20229 / NCIMB 8711 / NCTC 7292 / S-41).